We begin with the raw amino-acid sequence, 623 residues long: Kelch repeat and BTB domain-containing protein 2 (623 aa).

The BTB domain maps to 31–98; it reads TDIVLIVEGT…AYTGNLAMND (68 aa). The 97-residue stretch at 133 to 229 folds into the BACK domain; the sequence is CVRLLSFADL…IRIDALSEVT (97 aa). Residue serine 300 is modified to Phosphoserine. Kelch repeat units lie at residues 317–380, 381–429, 431–469, 470–529, and 535–581; these read DIYI…CCEG, YIYA…VVHD, IYVM…AFGD, KIFY…RAVV, and CVFM…DFRC.

In terms of assembly, component of the BCR(KBTBD2) E3 ubiquitin ligase complex, at least composed of CUL3, KBTBD2 and RBX1. Interacts (via the BTB domain) with CUL3.

It functions in the pathway protein modification; protein ubiquitination. Substrate-specific adapter of a BCR (BTB-CUL3-RBX1) E3 ubiquitin ligase complex that acts as a regulator of the insulin signaling pathway, modulating insulin sensitivity by limiting PIK3R1/p85alpha abundance in adipocytes. Targets PIK3R1, the regulatory subunit of phosphatidylinositol 3-kinase (PI3K), for 'Lys-48'-linked polyubiquitination and proteasome-mediated degradation. This chain is Kelch repeat and BTB domain-containing protein 2, found in Homo sapiens (Human).